The chain runs to 431 residues: Transcription factor Sp7 (431 aa).

Positions 30–56 are disordered; sequence SSPLRDSTTLGKAGTKKPYSVGSDLSA. Lys-41 and Lys-45 each carry N6-propionyllysine. Residue Lys-58 forms a Glycyl lysine isopeptide (Lys-Gly) (interchain with G-Cter in ubiquitin) linkage. 2 disordered regions span residues 71-115 and 154-260; these read TNGL…VPKG and TPTP…SGGY. A 9aaTAD motif is present at residues 156–164; sequence TPWWDMHPG. Residues 166–178 are compositionally biased toward gly residues; it reads NWLGGGQGQGDGL. Lys-230 participates in a covalent cross-link: Glycyl lysine isopeptide (Lys-Gly) (interchain with G-Cter in ubiquitin). 3 C2H2-type zinc fingers span residues 294–318, 324–348, and 354–376; these read HSCH…LRWH, FVCN…VRTH, and FTCL…QRTH. N6-propionyllysine is present on residues Lys-361 and Lys-371. A disordered region spans residues 367–431; the sequence is DHLSKHQRTH…SPEQSNLLEI (65 aa). Residues 403–412 are compositionally biased toward polar residues; that stretch reads SQTPRPSASP.

Belongs to the Sp1 C2H2-type zinc-finger protein family. As to quaternary structure, interacts with RIOX1; the interaction is direct and inhibits transcription activator activity. Ubiquitination at leads to proteasomal degradation. SP7 is a short-live protein with an endogenous half-life of approximately 12 hours. In terms of processing, propionylated. Depropionylation at Lys-371 by SIRT7 activates transcription factor activity and positively regulates bone formation by osteoblasts. Restricted to bone-derived cell.

The protein resides in the nucleus. Functionally, transcriptional activator essential for osteoblast differentiation. Binds to SP1 and EKLF consensus sequences and to other G/C-rich sequences. The chain is Transcription factor Sp7 (SP7) from Homo sapiens (Human).